Here is a 90-residue protein sequence, read N- to C-terminus: Neurotoxin LmNaTx19 (90 aa).

The N-terminal stretch at 1–19 is a signal peptide; sequence MNHLILIVAMCLMVIGVQC. The region spanning 21–80 is the LCN-type CS-alpha/beta domain; sequence KDGYLYDDVDCKFSCWDNEYCRKLCKSKKAVGGYCWRWRFSCYCTGLPDNEKTEGTYKCG. Intrachain disulfides connect C31–C79, C35–C55, C41–C62, and C45–C64.

This sequence belongs to the long (4 C-C) scorpion toxin superfamily. Sodium channel inhibitor family. Alpha subfamily. Expressed by the venom gland.

The protein resides in the secreted. In terms of biological role, binds voltage-independently at site-3 of voltage-gated sodium channels (Nav) and inhibits the inactivation of the activated channels, thereby blocking neuronal transmission. This chain is Neurotoxin LmNaTx19, found in Lychas mucronatus (Chinese swimming scorpion).